A 1429-amino-acid chain; its full sequence is Alpha-agarase (1429 aa).

An N-terminal signal peptide occupies residues 1–26; sequence MFKTKRSLLNSSIAISFAVLGVQAQA. CBM6 domains follow at residues 29 to 161 and 211 to 345; these read LELQ…FRLT and FVIQ…LTFT. Disordered regions lie at residues 349 to 400 and 474 to 495; these read SDGG…DGVS and NTPA…GEPG. The segment covering 369-378 has biased composition (polar residues); that stretch reads SSDSCPNTPT. Residues 490–638 form the PA14 domain; it reads NGGEPGDSYY…GGTNFVHPSN (149 aa). Positions 662–793 constitute a CBM6 3 domain; sequence IYIQLEDFDE…QWSGDLVRLA (132 aa).

This sequence belongs to the glycosyl hydrolase 96 family. Homodimer. Requires Ca(2+) as cofactor.

It carries out the reaction Endohydrolysis of 1,3-alpha-L-galactosidic linkages in agarose, yielding agarotetraose as the major product.. Its function is as follows. Alpha-agarase. Does not hydrolyze agarotetraose, agarohexaose, kappa-carrageenan, iota-carrageenan or lambda-carrageenan. This is Alpha-agarase from Alteromonas agarilytica.